The following is a 171-amino-acid chain: 3-hydroxyanthranilate 3,4-dioxygenase (171 aa).

Arg45 lines the O2 pocket. 3 residues coordinate Fe cation: His49, Glu55, and His93. Residue Glu55 participates in substrate binding. Positions 97 and 107 each coordinate substrate. 4 residues coordinate a divalent metal cation: Cys122, Cys125, Cys159, and Cys162.

It belongs to the 3-HAO family. Fe(2+) is required as a cofactor.

It localises to the cytoplasm. It catalyses the reaction 3-hydroxyanthranilate + O2 = (2Z,4Z)-2-amino-3-carboxymuconate 6-semialdehyde. It participates in cofactor biosynthesis; NAD(+) biosynthesis; quinolinate from L-kynurenine: step 3/3. Catalyzes the oxidative ring opening of 3-hydroxyanthranilate to 2-amino-3-carboxymuconate semialdehyde, which spontaneously cyclizes to quinolinate. This chain is 3-hydroxyanthranilate 3,4-dioxygenase, found in Candida albicans (strain SC5314 / ATCC MYA-2876) (Yeast).